Here is a 206-residue protein sequence, read N- to C-terminus: Hypoxanthine-guanine phosphoribosyltransferase (206 aa).

GMP is bound by residues 110-118 (DEVDDTRTT), Lys-154, and 181-187 (WIMYPWE). Asp-114 (proton acceptor) is an active-site residue.

It belongs to the purine/pyrimidine phosphoribosyltransferase family. As to quaternary structure, dimer. The cofactor is Mg(2+).

It is found in the endoplasmic reticulum. The enzyme catalyses IMP + diphosphate = hypoxanthine + 5-phospho-alpha-D-ribose 1-diphosphate. It catalyses the reaction GMP + diphosphate = guanine + 5-phospho-alpha-D-ribose 1-diphosphate. Functionally, converts guanine to guanosine monophosphate, and hypoxanthine to inosine monophosphate. Transfers the 5-phosphoribosyl group from 5-phosphoribosylpyrophosphate onto the purine. Plays a central role in the generation of purine nucleotides through the purine salvage pathway. The chain is Hypoxanthine-guanine phosphoribosyltransferase (hpt1) from Schizosaccharomyces pombe (strain 972 / ATCC 24843) (Fission yeast).